The chain runs to 249 residues: 1-(5-phosphoribosyl)-5-[(5-phosphoribosylamino)methylideneamino] imidazole-4-carboxamide isomerase (249 aa).

Asp-11 (proton acceptor) is an active-site residue. Catalysis depends on Asp-133, which acts as the Proton donor.

It belongs to the HisA/HisF family.

It localises to the cytoplasm. The catalysed reaction is 1-(5-phospho-beta-D-ribosyl)-5-[(5-phospho-beta-D-ribosylamino)methylideneamino]imidazole-4-carboxamide = 5-[(5-phospho-1-deoxy-D-ribulos-1-ylimino)methylamino]-1-(5-phospho-beta-D-ribosyl)imidazole-4-carboxamide. It functions in the pathway amino-acid biosynthesis; L-histidine biosynthesis; L-histidine from 5-phospho-alpha-D-ribose 1-diphosphate: step 4/9. This Haemophilus influenzae (strain 86-028NP) protein is 1-(5-phosphoribosyl)-5-[(5-phosphoribosylamino)methylideneamino] imidazole-4-carboxamide isomerase.